Consider the following 181-residue polypeptide: Large ribosomal subunit protein uL6 (181 aa).

It belongs to the universal ribosomal protein uL6 family. In terms of assembly, part of the 50S ribosomal subunit.

In terms of biological role, this protein binds to the 23S rRNA, and is important in its secondary structure. It is located near the subunit interface in the base of the L7/L12 stalk, and near the tRNA binding site of the peptidyltransferase center. This is Large ribosomal subunit protein uL6 from Saccharolobus solfataricus (strain ATCC 35092 / DSM 1617 / JCM 11322 / P2) (Sulfolobus solfataricus).